The chain runs to 141 residues: Large ribosomal subunit protein uL6 (141 aa).

This sequence belongs to the universal ribosomal protein uL6 family.

The polypeptide is Large ribosomal subunit protein uL6 (Haemonchus contortus (Barber pole worm)).